The primary structure comprises 549 residues: Chaperonin GroEL 2 (549 aa).

ATP-binding positions include 30-33, Lys-51, 87-91, Gly-415, 479-481, and Asp-495; these read TLGP, DGTTT, and NAA.

The protein belongs to the chaperonin (HSP60) family. As to quaternary structure, forms a cylinder of 14 subunits composed of two heptameric rings stacked back-to-back. Interacts with the co-chaperonin GroES.

The protein localises to the cytoplasm. The enzyme catalyses ATP + H2O + a folded polypeptide = ADP + phosphate + an unfolded polypeptide.. Together with its co-chaperonin GroES, plays an essential role in assisting protein folding. The GroEL-GroES system forms a nano-cage that allows encapsulation of the non-native substrate proteins and provides a physical environment optimized to promote and accelerate protein folding. The polypeptide is Chaperonin GroEL 2 (Polaromonas naphthalenivorans (strain CJ2)).